We begin with the raw amino-acid sequence, 219 residues long: Protoglabretal synthase ISM2 (219 aa).

5 helical membrane passes run 26–46, 59–79, 112–132, 144–164, and 178–198; these read VHAW…VLAG, LMIW…YWLF, AVVG…LFAV, ILQL…FITA, and YYKY…LIII. Positions 55–197 constitute an EXPERA domain; sequence TDKWLMIWWA…TWLLFPALII (143 aa).

This sequence belongs to the EBP family.

It is found in the membrane. It catalyses the reaction 7,8-epoxymelianol = protoglabretal. The protein operates within secondary metabolite biosynthesis; terpenoid biosynthesis. Isomerase involved in the biosynthesis of glabretanes triterpene natural products such as glabretal, a component with in vitro antiproliferative properties on lymphocytes. Catalyzes the conversion of 7,8-epoxymelianol to protoglabretal via skeletal rearrangements. The sequence is that of Protoglabretal synthase ISM2 from Ailanthus altissima (Tree-of-heaven).